Consider the following 86-residue polypeptide: Co-chaperonin GroES (86 aa).

This sequence belongs to the GroES chaperonin family. In terms of assembly, heptamer of 7 subunits arranged in a ring. Interacts with the chaperonin GroEL.

The protein localises to the cytoplasm. Its function is as follows. Together with the chaperonin GroEL, plays an essential role in assisting protein folding. The GroEL-GroES system forms a nano-cage that allows encapsulation of the non-native substrate proteins and provides a physical environment optimized to promote and accelerate protein folding. GroES binds to the apical surface of the GroEL ring, thereby capping the opening of the GroEL channel. This Campylobacter jejuni subsp. jejuni serotype O:6 (strain 81116 / NCTC 11828) protein is Co-chaperonin GroES.